A 394-amino-acid chain; its full sequence is Phenylalanine 4-monooxygenase, chloroplastic (394 aa).

The N-terminal 79 residues, 1–79 (MAMEVGYLRH…LNQIQAVSTA (79 aa)), are a transit peptide targeting the chloroplast. Residues 75–97 (AVSTAEKEREADKTSTPPIPSSI) form a disordered region. Residues His-252, His-257, and Glu-297 each contribute to the Fe cation site.

Belongs to the biopterin-dependent aromatic amino acid hydroxylase family. In terms of assembly, forms monomers. The cofactor is Fe(2+).

The protein localises to the plastid. It localises to the chloroplast. The enzyme catalyses (6R)-L-erythro-5,6,7,8-tetrahydrobiopterin + L-phenylalanine + O2 = (4aS,6R)-4a-hydroxy-L-erythro-5,6,7,8-tetrahydrobiopterin + L-tyrosine. Functionally, catalyzes the hydroxylation of L-phenylalanine to L-tyrosine. Does not seem to be tetrahydropterin-dependent and shows preference for 10-formyltetrahydrofolate as cosubstrate and electron donor. The chain is Phenylalanine 4-monooxygenase, chloroplastic from Physcomitrium patens (Spreading-leaved earth moss).